The following is a 690-amino-acid chain: Eukaryotic translation initiation factor 3 subunit B (690 aa).

Residues M1 to G11 show a composition bias toward basic and acidic residues. Positions M1 to S36 are disordered. Acidic residues predominate over residues N15 to F25. One can recognise an RRM domain in the interval S57 to D141. 5 WD repeats span residues T207 to K246, D293 to L331, I334 to E369, E442 to L484, and P530 to T575. Residues E595–R645 are a coiled coil.

Belongs to the eIF-3 subunit B family. Component of the eukaryotic translation initiation factor 3 (eIF-3) complex. The eIF-3 complex interacts with pix. Interacts with mxt.

The protein localises to the cytoplasm. Functionally, RNA-binding component of the eukaryotic translation initiation factor 3 (eIF-3) complex, which is involved in protein synthesis of a specialized repertoire of mRNAs and, together with other initiation factors, stimulates binding of mRNA and methionyl-tRNAi to the 40S ribosome. The eIF-3 complex specifically targets and initiates translation of a subset of mRNAs involved in cell proliferation. The polypeptide is Eukaryotic translation initiation factor 3 subunit B (Drosophila simulans (Fruit fly)).